We begin with the raw amino-acid sequence, 520 residues long: Bifunctional purine biosynthesis protein PurH (520 aa).

The MGS-like domain maps to 1 to 147; sequence MAKIGRALIS…KNNRDVTVVV (147 aa).

The protein belongs to the PurH family.

It carries out the reaction (6R)-10-formyltetrahydrofolate + 5-amino-1-(5-phospho-beta-D-ribosyl)imidazole-4-carboxamide = 5-formamido-1-(5-phospho-D-ribosyl)imidazole-4-carboxamide + (6S)-5,6,7,8-tetrahydrofolate. The catalysed reaction is IMP + H2O = 5-formamido-1-(5-phospho-D-ribosyl)imidazole-4-carboxamide. Its pathway is purine metabolism; IMP biosynthesis via de novo pathway; 5-formamido-1-(5-phospho-D-ribosyl)imidazole-4-carboxamide from 5-amino-1-(5-phospho-D-ribosyl)imidazole-4-carboxamide (10-formyl THF route): step 1/1. The protein operates within purine metabolism; IMP biosynthesis via de novo pathway; IMP from 5-formamido-1-(5-phospho-D-ribosyl)imidazole-4-carboxamide: step 1/1. The sequence is that of Bifunctional purine biosynthesis protein PurH from Citrifermentans bemidjiense (strain ATCC BAA-1014 / DSM 16622 / JCM 12645 / Bem) (Geobacter bemidjiensis).